Reading from the N-terminus, the 1302-residue chain is Vascular endothelial growth factor receptor kdr-like (1302 aa).

Residues methionine 1–glycine 28 form the signal peptide. Topologically, residues serine 29 to valine 740 are extracellular. 7 Ig-like C2-type domains span residues proline 34 to serine 115, aspartate 143 to alanine 206, lysine 222 to isoleucine 318, asparagine 326 to lysine 412, proline 419 to aspartate 542, proline 545 to threonine 636, and proline 643 to threonine 728. 2 cysteine pairs are disulfide-bonded: cysteine 55–cysteine 104 and cysteine 150–cysteine 199. N-linked (GlcNAc...) asparagine glycans are attached at residues asparagine 69 and asparagine 97. 17 N-linked (GlcNAc...) asparagine glycosylation sites follow: asparagine 242, asparagine 265, asparagine 291, asparagine 326, asparagine 370, asparagine 380, asparagine 408, asparagine 453, asparagine 466, asparagine 505, asparagine 517, asparagine 532, asparagine 607, asparagine 611, asparagine 630, asparagine 648, and asparagine 655. A disulfide bond links cysteine 243 and cysteine 302. Cysteine 444 and cysteine 524 are joined by a disulfide. An intrachain disulfide couples cysteine 565 to cysteine 618. Cysteine 664 and cysteine 712 are joined by a disulfide. The helical transmembrane segment at isoleucine 741 to isoleucine 761 threads the bilayer. Over arginine 762–valine 1302 the chain is Cytoplasmic. A Protein kinase domain is found at leucine 809–leucine 1139. ATP is bound by residues leucine 815–valine 823 and lysine 843. The Proton acceptor role is filled by aspartate 1003. Phosphotyrosine; by autocatalysis occurs at positions 1029, 1034, and 1150. Disordered regions lie at residues threonine 1159–leucine 1179 and proline 1266–asparagine 1292. A compositionally biased stretch (polar residues) spans aspartate 1162 to proline 1176.

The protein belongs to the protein kinase superfamily. Tyr protein kinase family. CSF-1/PDGF receptor subfamily. As to quaternary structure, interacts with isoform VEGF165 of vegfaa and isoform VEGF171 of vegfab. Post-translationally, phosphorylated and activated by vegfaa and vegfab. As to expression, first expressed in embryos between 5- and 7-somites. At 7 somites, expressed in discrete bilateral stripes both anteriorly and posteriorly, and in a transverse ectodermal stripe in the hindbrain. From 7-somites, expression seems to extend caudally from the head, and in both directions in the trunk region, until by 20-somites, expression is detected as a continuous band from the anterior head region to the tailbud. Concurrently, cells expressing kdrl in the mid- and posterior trunk regions converge medially. By 24 hours post-fertilization (hpf), expressed in all the endothelial cells lining the vasculature.

It is found in the cell membrane. The catalysed reaction is L-tyrosyl-[protein] + ATP = O-phospho-L-tyrosyl-[protein] + ADP + H(+). Receptor for VEGF or VEGFC. Has a tyrosine-protein kinase activity. Combinations of multiple VEGF receptors are required for development of different blood vessel types in the embryo. Involved in angiogenesis, specifically in VEGF-induced sprouting of new blood vessels. Particularly involved in artery formation. Does not appear to be required for hematopoiesis. This Danio rerio (Zebrafish) protein is Vascular endothelial growth factor receptor kdr-like (kdrl).